A 454-amino-acid polypeptide reads, in one-letter code: Adenosylmethionine-8-amino-7-oxononanoate aminotransferase (454 aa).

Pyridoxal 5'-phosphate is bound at residue 119–120; the sequence is GA. Tyrosine 152 provides a ligand contact to substrate. A pyridoxal 5'-phosphate-binding site is contributed by aspartate 257. Residues lysine 286, glycine 321, and arginine 416 each coordinate substrate. At lysine 286 the chain carries N6-(pyridoxal phosphate)lysine.

The protein belongs to the class-III pyridoxal-phosphate-dependent aminotransferase family. BioA subfamily. As to quaternary structure, homodimer. Pyridoxal 5'-phosphate serves as cofactor.

Its subcellular location is the cytoplasm. The enzyme catalyses (8S)-8-amino-7-oxononanoate + S-adenosyl-L-methionine = S-adenosyl-4-methylsulfanyl-2-oxobutanoate + (7R,8S)-7,8-diammoniononanoate. The protein operates within cofactor biosynthesis; biotin biosynthesis; 7,8-diaminononanoate from 8-amino-7-oxononanoate (SAM route): step 1/1. Its function is as follows. Catalyzes the transfer of the alpha-amino group from S-adenosyl-L-methionine (SAM) to 7-keto-8-aminopelargonic acid (KAPA) to form 7,8-diaminopelargonic acid (DAPA). It is the only aminotransferase known to utilize SAM as an amino donor. This is Adenosylmethionine-8-amino-7-oxononanoate aminotransferase from Anoxybacillus flavithermus (strain DSM 21510 / WK1).